The primary structure comprises 407 residues: Lymphocyte transmembrane adapter 1 (407 aa).

The segment at 1 to 25 is disordered; the sequence is MYSTPAPPEVTRRNSEPSTRQGTLG. Residues 1-33 are Extracellular-facing; the sequence is MYSTPAPPEVTRRNSEPSTRQGTLGSLQGEKGQ. Residues 16–25 are compositionally biased toward polar residues; the sequence is EPSTRQGTLG. Residues 34-54 form a helical; Signal-anchor for type III membrane protein membrane-spanning segment; that stretch reads IIFPGFVVLLTIILVIIAACI. Residues 55 to 407 are Cytoplasmic-facing; it reads LWSWKKQKKR…LATETSDEDA (353 aa). The interval 109 to 131 is disordered; it reads ESLLSRASDSPEPEAPQANGSLQ. Phosphotyrosine occurs at positions 185, 260, 286, and 353. The tract at residues 331 to 388 is disordered; sequence SAQSEDSAMVHREEQSSEDSSDYETVLVAELEGRDWKQGPGTQHPSDEGTPGDLAGKL.

As to quaternary structure, when phosphorylated, interacts with GRB2, PIK3R1 and GRAP2. In terms of processing, phosphorylated on tyrosines upon TCR or BCR activation; which leads to the recruitment of GRB2, PIK3R1 and GRAP2. In terms of tissue distribution, expressed in T-cells and B-cells.

It localises to the cell membrane. Negatively regulates TCR (T-cell antigen receptor)-mediated signaling in T-cells and BCR (B-cell antigen receptor)-mediated signaling in B-cells. This Mus musculus (Mouse) protein is Lymphocyte transmembrane adapter 1 (Lax1).